Consider the following 417-residue polypeptide: Inhibitor of growth protein 3 (417 aa).

Disordered stretches follow at residues Thr128 to Asn203 and Gln286 to Ser320. A compositionally biased stretch (basic residues) spans His136–Ser152. Positions Gly156 to Ser168 are enriched in basic and acidic residues. Composition is skewed to low complexity over residues Asn189–Asn203, Gln286–Ser295, and Ser307–Ser320. The PHD-type zinc-finger motif lies at Pro359–Ala408. Zn(2+) contacts are provided by Cys362, Cys364, Cys375, Cys380, His386, Cys389, Cys402, and Cys405.

The protein belongs to the ING family. Interacts with H3K4me3 and to a lesser extent with H3K4me2. Component of the NuA4 histone acetyltransferase complex.

The protein localises to the nucleus. Component of the NuA4 histone acetyltransferase (HAT) complex which is involved in transcriptional activation of select genes principally by acetylation of nucleosomal histone H4 and H2A. This modification may both alter nucleosome - DNA interactions and promote interaction of the modified histones with other proteins which positively regulate transcription. NuA4 may also play a direct role in DNA repair when directly recruited to sites of DNA damage. The sequence is that of Inhibitor of growth protein 3 (ING3) from Gallus gallus (Chicken).